The chain runs to 503 residues: Aromatase 1 (503 aa).

Cys-437 provides a ligand contact to heme.

This sequence belongs to the cytochrome P450 family. Heme is required as a cofactor.

The protein localises to the membrane. The enzyme catalyses testosterone + 3 reduced [NADPH--hemoprotein reductase] + 3 O2 = 17beta-estradiol + formate + 3 oxidized [NADPH--hemoprotein reductase] + 4 H2O + 4 H(+). The catalysed reaction is androst-4-ene-3,17-dione + 3 reduced [NADPH--hemoprotein reductase] + 3 O2 = estrone + formate + 3 oxidized [NADPH--hemoprotein reductase] + 4 H2O + 4 H(+). Its function is as follows. Catalyzes the formation of aromatic C18 estrogens from C19 androgens. The polypeptide is Aromatase 1 (CYP19A1) (Sus scrofa (Pig)).